We begin with the raw amino-acid sequence, 122 residues long: Large ribosomal subunit protein uL22 (122 aa).

Positions 103-122 (VEGKEMKSSKSHKKNQAEGK) are disordered.

This sequence belongs to the universal ribosomal protein uL22 family. In terms of assembly, part of the 50S ribosomal subunit.

In terms of biological role, this protein binds specifically to 23S rRNA; its binding is stimulated by other ribosomal proteins, e.g. L4, L17, and L20. It is important during the early stages of 50S assembly. It makes multiple contacts with different domains of the 23S rRNA in the assembled 50S subunit and ribosome. The globular domain of the protein is located near the polypeptide exit tunnel on the outside of the subunit, while an extended beta-hairpin is found that lines the wall of the exit tunnel in the center of the 70S ribosome. The sequence is that of Large ribosomal subunit protein uL22 from Helicobacter pylori (strain P12).